Reading from the N-terminus, the 166-residue chain is Sperm-egg fusion protein TMEM95 (166 aa).

The N-terminal stretch at 1-16 (MWTLALGGIFLAAVEA) is a signal peptide. 4 disulfide bridges follow: Cys-17/Cys-118, Cys-20/Cys-121, Cys-105/Cys-128, and Cys-109/Cys-134. The Extracellular portion of the chain corresponds to 17–145 (CVFCRFPDRE…PGSHDLWEAR (129 aa)). A glycan (N-linked (GlcNAc...) asparagine) is linked at Asn-117. A helical membrane pass occupies residues 146–165 (ILLLFVCGTALLLGVPSLAV). Residue Glu-166 is a topological domain, cytoplasmic.

Belongs to the TMEM95 family. Does not interact with sperm-egg fusion proteins IZUMO1 or IZUMO1R/JUNO. Post-translationally, N-glycosylated. Detected in testis and brain with higher levels in brain than testis.

It localises to the cytoplasmic vesicle. The protein localises to the secretory vesicle. The protein resides in the acrosome membrane. In terms of biological role, sperm protein required for fusion of sperm with the egg membrane during fertilization. The protein is Sperm-egg fusion protein TMEM95 of Bos taurus (Bovine).